The following is a 286-amino-acid chain: Homoserine kinase (286 aa).

Residue 78-88 (PLARGLGSSSS) participates in ATP binding.

It belongs to the GHMP kinase family. Homoserine kinase subfamily.

Its subcellular location is the cytoplasm. It carries out the reaction L-homoserine + ATP = O-phospho-L-homoserine + ADP + H(+). The protein operates within amino-acid biosynthesis; L-threonine biosynthesis; L-threonine from L-aspartate: step 4/5. Its function is as follows. Catalyzes the ATP-dependent phosphorylation of L-homoserine to L-homoserine phosphate. This chain is Homoserine kinase, found in Streptococcus equi subsp. equi (strain 4047).